A 155-amino-acid polypeptide reads, in one-letter code: Protein FAM162A (155 aa).

The tract at residues 77-103 (RFKKEEEIPETISFEMLDAAKNKLRVK) is required for proapoptotic activity. The chain crosses the membrane as a helical span at residues 104–121 (VSYLMIALTVAGCIYMVI).

This sequence belongs to the UPF0389 family. Interacts with HSP90AB1; HSP90AB1 is essential for FAM162A mitochondrial localization and pro-apoptotic activity. Interacts with VDAC2; the interaction is probably involved in inducing mitochondrial permeability transition.

The protein resides in the mitochondrion membrane. Proposed to be involved in regulation of apoptosis; the exact mechanism may differ between cell types/tissues. May be involved in hypoxia-induced cell death of transformed cells implicating cytochrome C release and caspase activation (such as CASP9) and inducing mitochondrial permeability transition. May be involved in hypoxia-induced cell death of neuronal cells probably by promoting release of AIFM1 from mitochondria to cytoplasm and its translocation to the nucleus; however, the involvement of caspases has been reported conflictingly. The chain is Protein FAM162A (Fam162a) from Mus musculus (Mouse).